Here is a 257-residue protein sequence, read N- to C-terminus: UPF0246 protein RSKD131_2757 (257 aa).

It belongs to the UPF0246 family.

This chain is UPF0246 protein RSKD131_2757, found in Cereibacter sphaeroides (strain KD131 / KCTC 12085) (Rhodobacter sphaeroides).